A 20-amino-acid chain; its full sequence is U27-ctenitoxin-Pn1a (20 aa).

Positions 1–20 (LAKRADICQPGKTSQRACET) are disordered. Residues 11–20 (GKTSQRACET) are compositionally biased toward polar residues.

Contains 4 disulfide bonds. As to expression, expressed by the venom gland.

It is found in the secreted. In terms of biological role, has a vascular smooth muscle contracting activity. Causes short-lived contractions of both arterial and venous rabbit vessels. This is U27-ctenitoxin-Pn1a from Phoneutria nigriventer (Brazilian armed spider).